Reading from the N-terminus, the 254-residue chain is Type III pantothenate kinase (254 aa).

7–14 (DVGNTRLK) serves as a coordination point for ATP. Residues tyrosine 96 and 103-106 (GSDR) each bind substrate. The active-site Proton acceptor is aspartate 105. Threonine 133 is a binding site for ATP. Threonine 183 serves as a coordination point for substrate.

Belongs to the type III pantothenate kinase family. In terms of assembly, homodimer. Requires NH4(+) as cofactor. It depends on K(+) as a cofactor.

It is found in the cytoplasm. The enzyme catalyses (R)-pantothenate + ATP = (R)-4'-phosphopantothenate + ADP + H(+). Its pathway is cofactor biosynthesis; coenzyme A biosynthesis; CoA from (R)-pantothenate: step 1/5. Catalyzes the phosphorylation of pantothenate (Pan), the first step in CoA biosynthesis. The protein is Type III pantothenate kinase of Paracidovorax citrulli (strain AAC00-1) (Acidovorax citrulli).